We begin with the raw amino-acid sequence, 136 residues long: NADPH-dependent 7-cyano-7-deazaguanine reductase (136 aa).

Cysteine 50 functions as the Thioimide intermediate in the catalytic mechanism. Aspartate 57 acts as the Proton donor in catalysis. Residues 72–74 (YEL) and 91–92 (HE) each bind substrate.

This sequence belongs to the GTP cyclohydrolase I family. QueF type 1 subfamily.

Its subcellular location is the cytoplasm. The enzyme catalyses 7-aminomethyl-7-carbaguanine + 2 NADP(+) = 7-cyano-7-deazaguanine + 2 NADPH + 3 H(+). The protein operates within tRNA modification; tRNA-queuosine biosynthesis. In terms of biological role, catalyzes the NADPH-dependent reduction of 7-cyano-7-deazaguanine (preQ0) to 7-aminomethyl-7-deazaguanine (preQ1). This is NADPH-dependent 7-cyano-7-deazaguanine reductase from Prochlorococcus marinus (strain MIT 9215).